The sequence spans 415 residues: Serine--tRNA ligase (415 aa).

L-serine is bound at residue 231–233 (TAE). Position 262–264 (262–264 (RSE)) interacts with ATP. E285 is an L-serine binding site. An ATP-binding site is contributed by 349 to 352 (EISS). L-serine is bound at residue S383.

The protein belongs to the class-II aminoacyl-tRNA synthetase family. Type-1 seryl-tRNA synthetase subfamily. As to quaternary structure, homodimer. The tRNA molecule binds across the dimer.

It is found in the cytoplasm. The catalysed reaction is tRNA(Ser) + L-serine + ATP = L-seryl-tRNA(Ser) + AMP + diphosphate + H(+). It carries out the reaction tRNA(Sec) + L-serine + ATP = L-seryl-tRNA(Sec) + AMP + diphosphate + H(+). The protein operates within aminoacyl-tRNA biosynthesis; selenocysteinyl-tRNA(Sec) biosynthesis; L-seryl-tRNA(Sec) from L-serine and tRNA(Sec): step 1/1. Catalyzes the attachment of serine to tRNA(Ser). Is also able to aminoacylate tRNA(Sec) with serine, to form the misacylated tRNA L-seryl-tRNA(Sec), which will be further converted into selenocysteinyl-tRNA(Sec). In Helicobacter pylori (strain J99 / ATCC 700824) (Campylobacter pylori J99), this protein is Serine--tRNA ligase.